The primary structure comprises 583 residues: CD166 antigen (583 aa).

Residues 1–27 (MASKGSPSCRLVFCLLISAAVLRPGLG) form the signal peptide. Ig-like V-type domains lie at 28–120 (WYTV…TEDN) and 125–234 (PTLV…KTIY). The Extracellular portion of the chain corresponds to 28 to 527 (WYTVNSAYGD…NREKVNDQAK (500 aa)). 2 disulfide bridges follow: C43-C113 and C157-C220. N95, N167, N265, N306, N361, N457, N480, and N499 each carry an N-linked (GlcNAc...) asparagine glycan. Ig-like C2-type domains lie at 245–328 (PTEQ…TTIT), 333–409 (DLSL…ESLT), and 416–501 (PQIK…LNVS). 3 disulfides stabilise this stretch: C270–C313, C354–C392, and C435–C485. The chain crosses the membrane as a helical span at residues 528–549 (LIVGIVVGLLLAALVAGVVYWL). At 550-583 (YMKKSKTASKHVNKDLGNMEENKKLEENNHKTEA) the chain is on the cytoplasmic side. A disordered region spans residues 562-583 (NKDLGNMEENKKLEENNHKTEA). The segment covering 569-583 (EENKKLEENNHKTEA) has biased composition (basic and acidic residues).

In terms of assembly, homodimer. Interacts (via extracellular domain) with CD6 (via extracellular domain). Homodimerization and interaction with CD6 involve the same region and cannot occur simultaneously. The affinity for CD6 is much higher than the affinity for self-association. Interacts (via glycosylated extracellular domain) with LGALS1 and LGALS3. Interaction with LGALS1 or LGALS3 inhibits interaction with CD6. Post-translationally, the N-terminus is blocked. Glycosylated. As to expression, strongest expression in the lung, then brain, liver, and kidney. Present in the somatosensory system, basal ganglia, cortex, olfactory system, and circumventricular organs.

It localises to the cell membrane. The protein localises to the cell projection. Its subcellular location is the axon. The protein resides in the dendrite. Functionally, cell adhesion molecule that mediates both heterotypic cell-cell contacts via its interaction with CD6, as well as homotypic cell-cell contacts. Promotes T-cell activation and proliferation via its interactions with CD6. Contributes to the formation and maturation of the immunological synapse via its interactions with CD6. Mediates homotypic interactions with cells that express ALCAM. Mediates attachment of dendritic cells onto endothelial cells via homotypic interaction. Inhibits endothelial cell migration and promotes endothelial tube formation via homotypic interactions. Required for normal organization of the lymph vessel network. Required for normal hematopoietic stem cell engraftment in the bone marrow. Plays a role in hematopoiesis; required for normal numbers of hematopoietic stem cells in bone marrow. Promotes in vitro osteoblast proliferation and differentiation. Promotes neurite extension, axon growth and axon guidance; axons grow preferentially on surfaces that contain ALCAM. Mediates outgrowth and pathfinding for retinal ganglion cell axons. The protein is CD166 antigen (Alcam) of Rattus norvegicus (Rat).